A 122-amino-acid polypeptide reads, in one-letter code: Large ribosomal subunit protein bL12 (122 aa).

The tract at residues 96–122 (APKSLKTGLSKDEANEMKKKLEDAGAT) is disordered. Residues 104-122 (LSKDEANEMKKKLEDAGAT) show a composition bias toward basic and acidic residues.

This sequence belongs to the bacterial ribosomal protein bL12 family. In terms of assembly, homodimer. Part of the ribosomal stalk of the 50S ribosomal subunit. Forms a multimeric L10(L12)X complex, where L10 forms an elongated spine to which 2 to 4 L12 dimers bind in a sequential fashion. Binds GTP-bound translation factors.

In terms of biological role, forms part of the ribosomal stalk which helps the ribosome interact with GTP-bound translation factors. Is thus essential for accurate translation. The protein is Large ribosomal subunit protein bL12 of Liberibacter asiaticus (Citrus greening disease).